Reading from the N-terminus, the 97-residue chain is Cell division protein FtsL (97 aa).

At 1 to 11 (MSRLFVKRLPT) the chain is on the cytoplasmic side. Residues 12–32 (GSFLMLLLYIGLLLSAIAVAY) traverse the membrane as a helical segment. Over 33–97 (STYWNRQLLN…DPAEVRMVAP (65 aa)) the chain is Periplasmic.

Belongs to the FtsL family. In terms of assembly, part of a complex composed of FtsB, FtsL and FtsQ.

Its subcellular location is the cell inner membrane. Essential cell division protein. May link together the upstream cell division proteins, which are predominantly cytoplasmic, with the downstream cell division proteins, which are predominantly periplasmic. The protein is Cell division protein FtsL of Pseudomonas aeruginosa (strain ATCC 15692 / DSM 22644 / CIP 104116 / JCM 14847 / LMG 12228 / 1C / PRS 101 / PAO1).